The sequence spans 99 residues: Co-chaperonin GroES (99 aa).

This sequence belongs to the GroES chaperonin family. As to quaternary structure, heptamer of 7 subunits arranged in a ring. Interacts with the chaperonin GroEL.

The protein localises to the cytoplasm. Together with the chaperonin GroEL, plays an essential role in assisting protein folding. The GroEL-GroES system forms a nano-cage that allows encapsulation of the non-native substrate proteins and provides a physical environment optimized to promote and accelerate protein folding. GroES binds to the apical surface of the GroEL ring, thereby capping the opening of the GroEL channel. The polypeptide is Co-chaperonin GroES (Rhodococcus erythropolis (strain PR4 / NBRC 100887)).